The primary structure comprises 335 residues: Aspartate carbamoyltransferase catalytic subunit (335 aa).

Carbamoyl phosphate contacts are provided by Arg54 and Thr55. L-aspartate is bound at residue Lys82. 3 residues coordinate carbamoyl phosphate: Arg104, His134, and Gln137. Residues Arg177 and Arg232 each contribute to the L-aspartate site. Residues Gly277 and Pro278 each contribute to the carbamoyl phosphate site.

This sequence belongs to the aspartate/ornithine carbamoyltransferase superfamily. ATCase family. Heterododecamer (2C3:3R2) of six catalytic PyrB chains organized as two trimers (C3), and six regulatory PyrI chains organized as three dimers (R2).

It carries out the reaction carbamoyl phosphate + L-aspartate = N-carbamoyl-L-aspartate + phosphate + H(+). It functions in the pathway pyrimidine metabolism; UMP biosynthesis via de novo pathway; (S)-dihydroorotate from bicarbonate: step 2/3. Its function is as follows. Catalyzes the condensation of carbamoyl phosphate and aspartate to form carbamoyl aspartate and inorganic phosphate, the committed step in the de novo pyrimidine nucleotide biosynthesis pathway. The polypeptide is Aspartate carbamoyltransferase catalytic subunit (Paenarthrobacter aurescens (strain TC1)).